The primary structure comprises 736 residues: MLSLGSGGAKSSKPSFVSYVTPEEIKLEKDPQKKEKHPDLLPGEVVFCSANPILKYTQDDLSQRGVFGTLLCTNFRVAFISDDAPQEEMSKTFKNKLYGENDIPLMCVDHIYGVYDEKRKLITGGLVKNKCPSKMIIHCKDLRVFQFCLTFSKEEDAKRIFQGIAHHCLEEKSLKCVFAFSYLRSTNPEMLRKREAIMFDSPEDWTQEMKRTKAQCRLVTENENFELSQRLPQYFVIPSALGDLFNYQGKGLPIWCWSHHSGCALFKASFPSMTQEDGDFQSHLDTMITAVARNYLYSVKTEDLSESLPTLQDIQQSYNKFKQYFLIDNTTDFWLSDVKWFSSLESSGWLDIIRQCLQKAVEVVECLEKDNTNVLITEEEGTDLCCVISSLAQIMLDPYYRTLMGFQSLVQKEWVAGCHAFLDRCNHLHQKDKECHSPVFLLFLECVWQLVQQHSPAFQFSETYLTVLSDSVHVPIFSTFLFNSAHHRESVMKAESPIAQSRPLSCPTVWDWSVQFDSKAQNFFFNPLYSEKVKHERTVRRPHKHKHQRQLSLPSSAFKTPTKKGFFKDETDSLKKMLRVKRISRWMGSPDSPVVASREFYESWQQRPLDYHGLLLPSLDGPSVRIWMQRYLRWIPEVHIMGGGSVAIMTKLMELLSQVEDLKRVLEQRDPSLATQPDHPPPLHHRLPSFGSSGRLSSSFPFTYSRNRSFKPIIPTGLMQSLMVADNLANQEDETS.

The region spanning 182–558 is the Myotubularin phosphatase domain; the sequence is YLRSTNPEML…RQLSLPSSAF (377 aa). Residues 672-691 are disordered; sequence SLATQPDHPPPLHHRLPSFG.

Belongs to the protein-tyrosine phosphatase family. Non-receptor class myotubularin subfamily. Heterodimer with lipid phosphatase mtm1. In skeletal muscles, the interaction stabilizes both mtmr12 and mtm1 protein levels.

It localises to the cytoplasm. The protein resides in the sarcoplasmic reticulum. It is found in the myofibril. Its subcellular location is the sarcomere. Its function is as follows. Acts as an adapter for the myotubularin phosphatase mtm1 to regulate mtm1 protein stability and possibly its intracellular location. By stabilizing mtm1 protein levels, required for skeletal muscle maintenance but not for myogenesis. In skeletal muscle cells, does not regulate mtm1 subcellular localization. The chain is Myotubularin-related protein 12 (mtmr12) from Danio rerio (Zebrafish).